The following is a 647-amino-acid chain: Probable inactive receptor kinase RLK902 (647 aa).

Residues Met-1–Gly-29 form the signal peptide. 5 LRR repeats span residues Gly-69–Asn-93, Leu-94–Cys-118, Ser-119–Leu-142, Asn-144–Asn-165, and Leu-166–Gln-192. A helical membrane pass occupies residues Gly-268 to Phe-288. Positions Arg-365 to Arg-639 constitute a Protein kinase domain. At Ser-367 the chain carries Phosphoserine. Leu-371–Ala-379 lines the ATP pocket. Thr-388 is modified (phosphothreonine). Residue Lys-393 participates in ATP binding. Residue Ser-444 is modified to Phosphoserine. Thr-520 is subject to Phosphothreonine. Ser-540 carries the post-translational modification Phosphoserine. Residue Thr-618 is modified to Phosphothreonine.

It belongs to the protein kinase superfamily. Ser/Thr protein kinase family. In terms of assembly, interacts with At3g17950, At3g27210 and At5g05190. In terms of processing, autophosphorylation. Expressed in root tips, lateral root primordia, stipules, and floral organ abscission zones.

It is found in the cell membrane. The chain is Probable inactive receptor kinase RLK902 (RLK902) from Arabidopsis thaliana (Mouse-ear cress).